The sequence spans 319 residues: CCAAT/enhancer-binding protein homolog 1 (319 aa).

A n' domain; required for axon regeneration region spans residues 53–67; the sequence is SLTIAASLQQRDRER. The interval 163 to 319 is disordered; that stretch reads TRRAVKRPVP…QRHILENFNK (157 aa). Residues 171–181 are compositionally biased toward basic and acidic residues; the sequence is VPYDDYQKEYS. Positions 182 to 198 are enriched in acidic residues; the sequence is EESSDMTDNDGSVDDSY. Composition is skewed to basic and acidic residues over residues 225 to 248, 255 to 274, 281 to 291, and 302 to 319; these read LKAD…DAVR, KELQ…RIAE, SERDARRRDQD, and PMKE…NFNK. The region spanning 233–308 is the bZIP domain; it reads EPTYKLKRAR…NKGPMKEQRM (76 aa). Residues 237–271 form a basic motif region; that stretch reads KLKRARNNDAVRKSRKKAKELQDKKEAEHDKMKRR. The tract at residues 275–308 is leucine-zipper; sequence LEGLLQSERDARRRDQDTLEQLLRNKGPMKEQRM.

Belongs to the bZIP family. C/EBP subfamily. May interact with transcription factor ets-4. May interact (via N-terminus) with nipi-3. May interact (via N-terminus) with importin subunit alpha ima-3. As to expression, expressed in touch and motor neurons.

It is found in the synapse. It localises to the cytoplasm. The protein resides in the nucleus. The protein localises to the cell projection. Its subcellular location is the axon. Transcription factor. Binds to promoter regions of target genes, perhaps at the motif 5'-[AGCT]TT[AGT][TC]GAAA[ACT]-3'. Modulates expression of genes involved in development and in stress responses, including those regulating the p38/MAPK signaling pathways such as MAPKK sek-1 and phosphatase vhp-1. Involved in innate immunity. Plays a role in repressing the response to infection by the Gram-negative bacterium P.aeruginosa, perhaps acting independently of the pmk-1 or pmk-3 p38/MAPK pathways. However, also plays a protective role in the response to infection by P.aeruginosa. Required in axonal regrowth following injury and synaptogenesis. Following axon injury, in concert with transcription factor ets-4, activates expression of receptor tyrosine kinase svh-2. May function downstream of the Ca2+-activated p38/MAPK pathway to promote axon regeneration. Plays a role in modulating polymerization of neuronal microtubules. Involved in modulating lipid homeostasis. The protein is CCAAT/enhancer-binding protein homolog 1 of Caenorhabditis elegans.